The chain runs to 346 residues: Ribosomal RNA small subunit methyltransferase H (346 aa).

Residues 47-49, aspartate 65, phenylalanine 92, aspartate 113, and glutamine 120 contribute to the S-adenosyl-L-methionine site; that span reads GGY. Residues 294–346 are disordered; sequence AVEPGSDEVAGNPRARSAKLRAAERTDAPAHPDGDLAGLLPADLSQRRGRRRS. Residues 314-327 show a composition bias toward basic and acidic residues; it reads RAAERTDAPAHPDG. The segment covering 328–337 has biased composition (low complexity); that stretch reads DLAGLLPADL.

This sequence belongs to the methyltransferase superfamily. RsmH family.

It is found in the cytoplasm. It carries out the reaction cytidine(1402) in 16S rRNA + S-adenosyl-L-methionine = N(4)-methylcytidine(1402) in 16S rRNA + S-adenosyl-L-homocysteine + H(+). In terms of biological role, specifically methylates the N4 position of cytidine in position 1402 (C1402) of 16S rRNA. The chain is Ribosomal RNA small subunit methyltransferase H from Azorhizobium caulinodans (strain ATCC 43989 / DSM 5975 / JCM 20966 / LMG 6465 / NBRC 14845 / NCIMB 13405 / ORS 571).